The sequence spans 100 residues: UPF0248 protein APE_0939 (100 aa).

It belongs to the UPF0248 family.

This Aeropyrum pernix (strain ATCC 700893 / DSM 11879 / JCM 9820 / NBRC 100138 / K1) protein is UPF0248 protein APE_0939.